Here is a 572-residue protein sequence, read N- to C-terminus: Phosphoenolpyruvate-protein phosphotransferase (572 aa).

The active-site Tele-phosphohistidine intermediate is His190. Positions 297 and 333 each coordinate phosphoenolpyruvate. Mg(2+) contacts are provided by Glu427 and Asp451. Phosphoenolpyruvate is bound by residues 450–451 (ND) and Arg461. Catalysis depends on Cys498, which acts as the Proton donor.

It belongs to the PEP-utilizing enzyme family. In terms of assembly, homodimer. Mg(2+) is required as a cofactor.

The protein resides in the cytoplasm. The catalysed reaction is L-histidyl-[protein] + phosphoenolpyruvate = N(pros)-phospho-L-histidyl-[protein] + pyruvate. General (non sugar-specific) component of the phosphoenolpyruvate-dependent sugar phosphotransferase system (sugar PTS). This major carbohydrate active-transport system catalyzes the phosphorylation of incoming sugar substrates concomitantly with their translocation across the cell membrane. Enzyme I transfers the phosphoryl group from phosphoenolpyruvate (PEP) to the phosphoryl carrier protein (HPr). This Mycoplasma pneumoniae (strain ATCC 29342 / M129 / Subtype 1) (Mycoplasmoides pneumoniae) protein is Phosphoenolpyruvate-protein phosphotransferase (ptsI).